A 366-amino-acid chain; its full sequence is Anhydro-N-acetylmuramic acid kinase (366 aa).

An ATP-binding site is contributed by 15 to 22; that stretch reads GTSLDGVD.

This sequence belongs to the anhydro-N-acetylmuramic acid kinase family.

It carries out the reaction 1,6-anhydro-N-acetyl-beta-muramate + ATP + H2O = N-acetyl-D-muramate 6-phosphate + ADP + H(+). Its pathway is amino-sugar metabolism; 1,6-anhydro-N-acetylmuramate degradation. It functions in the pathway cell wall biogenesis; peptidoglycan recycling. In terms of biological role, catalyzes the specific phosphorylation of 1,6-anhydro-N-acetylmuramic acid (anhMurNAc) with the simultaneous cleavage of the 1,6-anhydro ring, generating MurNAc-6-P. Is required for the utilization of anhMurNAc either imported from the medium or derived from its own cell wall murein, and thus plays a role in cell wall recycling. This chain is Anhydro-N-acetylmuramic acid kinase, found in Hydrogenovibrio crunogenus (strain DSM 25203 / XCL-2) (Thiomicrospira crunogena).